The following is a 932-amino-acid chain: Protocadherin gamma-A7 (932 aa).

Positions 1–28 (MAAQPRGGDYRGFFLLSILLGTPWEAWA) are cleaved as a signal peptide. 6 consecutive Cadherin domains span residues 29–133 (GRIL…VPRF), 134–242 (LTEE…TPVF), 243–347 (SLPQ…APEV), 348–452 (TMTS…PPTF), 453–562 (PHSS…PPEI), and 570–682 (DGST…EPSD). The Extracellular portion of the chain corresponds to 29–692 (GRILYSVSEE…GPYNYDLTLY (664 aa)). Asn419 and Asn545 each carry an N-linked (GlcNAc...) asparagine glycan. A helical transmembrane segment spans residues 693 to 713 (LVVAVATVSCVFLAFVLVLLA). The Cytoplasmic portion of the chain corresponds to 714–932 (LRLRRWHKSR…KKKSGKKEKK (219 aa)). Disordered stretches follow at residues 805–841 (PSIQ…WPNN) and 902–932 (ATLT…KEKK). Positions 922-932 (NKKKSGKKEKK) are enriched in basic residues.

The protein resides in the cell membrane. Functionally, potential calcium-dependent cell-adhesion protein. May be involved in the establishment and maintenance of specific neuronal connections in the brain. The protein is Protocadherin gamma-A7 (PCDHGA7) of Homo sapiens (Human).